Consider the following 84-residue polypeptide: RNA-binding protein Hfq (84 aa).

The 60-residue stretch at 10 to 69 folds into the Sm domain; it reads DPFLNILRKERIPVSIYLVNGIKLQGQIDSFDQYVVLLKNSVTQMVYKHAISTIVPAKAI.

Belongs to the Hfq family. In terms of assembly, homohexamer.

In terms of biological role, RNA chaperone that binds small regulatory RNA (sRNAs) and mRNAs to facilitate mRNA translational regulation in response to envelope stress, environmental stress and changes in metabolite concentrations. Also binds with high specificity to tRNAs. In Nitrosomonas europaea (strain ATCC 19718 / CIP 103999 / KCTC 2705 / NBRC 14298), this protein is RNA-binding protein Hfq.